Consider the following 287-residue polypeptide: RNA polymerase sigma factor RpoH (287 aa).

Residues 54–123 (LILSHLRFVI…IHEYVLRNWR (70 aa)) are sigma-70 factor domain-2. The Interaction with polymerase core subunit RpoC signature appears at 78–81 (DLIQ). Residues 230-283 (ALSSLDERSRNIIHARWLDDSDHKMTLREIAHNYGISAERVRQLEKNAMKKLKV) are sigma-70 factor domain-4. Positions 256–275 (LREIAHNYGISAERVRQLEK) form a DNA-binding region, H-T-H motif.

It belongs to the sigma-70 factor family. RpoH subfamily. In terms of assembly, interacts with the RNA polymerase core enzyme.

Its subcellular location is the cytoplasm. In terms of biological role, sigma factors are initiation factors that promote the attachment of RNA polymerase to specific initiation sites and are then released. This sigma factor is involved in regulation of expression of heat shock genes. This Buchnera aphidicola subsp. Baizongia pistaciae (strain Bp) protein is RNA polymerase sigma factor RpoH.